A 71-amino-acid chain; its full sequence is General transcription factor IIH subunit 5 (71 aa).

Thr-69 bears the Phosphothreonine mark.

It belongs to the TFB5 family. Component of the 7-subunit TFIIH core complex composed of XPB/ERCC3, XPD/ERCC2, GTF2H1, GTF2H2, GTF2H3, GTF2H4 and GTF2H5, which is active in NER. The core complex associates with the 3-subunit CDK-activating kinase (CAK) module composed of CCNH/cyclin H, CDK7 and MNAT1 to form the 10-subunit holoenzyme (holo-TFIIH) active in transcription. Part of TBP-based Pol II pre-initiation complex (PIC), in which Pol II core assembles with general transcription factors and other specific initiation factors including GTF2E1, GTF2E2, GTF2F1, GTF2F2, TCEA1, ERCC2, ERCC3, GTF2H2, GTF2H3, GTF2H4, GTF2H5, GTF2A1, GTF2A2, GTF2B and TBP; this large multi-subunit PIC complex mediates DNA unwinding and targets Pol II core to the transcription start site where the first phosphodiester bond forms.

Its subcellular location is the nucleus. It is found in the cytoplasm. Its function is as follows. Component of the general transcription and DNA repair factor IIH (TFIIH) core complex, which is involved in general and transcription-coupled nucleotide excision repair (NER) of damaged DNA and, when complexed to CAK, in RNA transcription by RNA polymerase II. In NER, TFIIH acts by opening DNA around the lesion to allow the excision of the damaged oligonucleotide and its replacement by a new DNA fragment. In transcription, TFIIH has an essential role in transcription initiation. When the pre-initiation complex (PIC) has been established, TFIIH is required for promoter opening and promoter escape. Phosphorylation of the C-terminal tail (CTD) of the largest subunit of RNA polymerase II by the kinase module CAK controls the initiation of transcription. Necessary for the stability of the TFIIH complex and for the presence of normal levels of TFIIH in the cell. The chain is General transcription factor IIH subunit 5 from Mus musculus (Mouse).